Here is a 315-residue protein sequence, read N- to C-terminus: Homoserine kinase (315 aa).

An ATP-binding site is contributed by 97-107; it reads PPARGLGSSAT.

This sequence belongs to the GHMP kinase family. Homoserine kinase subfamily.

The protein localises to the cytoplasm. The catalysed reaction is L-homoserine + ATP = O-phospho-L-homoserine + ADP + H(+). It functions in the pathway amino-acid biosynthesis; L-threonine biosynthesis; L-threonine from L-aspartate: step 4/5. Functionally, catalyzes the ATP-dependent phosphorylation of L-homoserine to L-homoserine phosphate. The chain is Homoserine kinase from Synechococcus sp. (strain CC9605).